A 131-amino-acid polypeptide reads, in one-letter code: Fumarate reductase subunit C (131 aa).

3 consecutive transmembrane segments (helical) span residues 30–50, 63–83, and 109–129; these read EGTAVPAVWFSIELIFGLFAL, FLQNPVIVIINLITLAAALLH, and IIKSLWAVTVVATIVILFVAL.

It belongs to the FrdC family. In terms of assembly, part of an enzyme complex containing four subunits: a flavoprotein (FrdA), an iron-sulfur protein (FrdB), and two hydrophobic anchor proteins (FrdC and FrdD).

It localises to the cell inner membrane. In terms of biological role, two distinct, membrane-bound, FAD-containing enzymes are responsible for the catalysis of fumarate and succinate interconversion; fumarate reductase is used in anaerobic growth, and succinate dehydrogenase is used in aerobic growth. Anchors the catalytic components of the fumarate reductase complex to the cell inner membrane, binds quinones. The protein is Fumarate reductase subunit C of Shigella boydii serotype 18 (strain CDC 3083-94 / BS512).